The following is a 363-amino-acid chain: S-adenosylmethionine:tRNA ribosyltransferase-isomerase (363 aa).

This sequence belongs to the QueA family. As to quaternary structure, monomer.

It localises to the cytoplasm. The catalysed reaction is 7-aminomethyl-7-carbaguanosine(34) in tRNA + S-adenosyl-L-methionine = epoxyqueuosine(34) in tRNA + adenine + L-methionine + 2 H(+). It participates in tRNA modification; tRNA-queuosine biosynthesis. In terms of biological role, transfers and isomerizes the ribose moiety from AdoMet to the 7-aminomethyl group of 7-deazaguanine (preQ1-tRNA) to give epoxyqueuosine (oQ-tRNA). The polypeptide is S-adenosylmethionine:tRNA ribosyltransferase-isomerase (Haemophilus influenzae (strain PittEE)).